A 215-amino-acid chain; its full sequence is Probable phosphoglycerate mutase GpmB (215 aa).

Substrate contacts are provided by residues 8–15 (RHGETQWN), 21–22 (QG), Arg58, Lys60, 82–85 (ELDM), 104–105 (RR), and 151–152 (GI). The active-site Tele-phosphohistidine intermediate is the His9. The active-site Proton donor/acceptor is the Glu82.

The protein belongs to the phosphoglycerate mutase family. GpmB subfamily.

It carries out the reaction (2R)-2-phosphoglycerate = (2R)-3-phosphoglycerate. It participates in carbohydrate degradation; glycolysis; pyruvate from D-glyceraldehyde 3-phosphate: step 3/5. This Salmonella typhi protein is Probable phosphoglycerate mutase GpmB.